The chain runs to 607 residues: Proteasome-associated ATPase (607 aa).

The segment covering 1 to 17 (MTESDRHDTPKGDRRIS) has biased composition (basic and acidic residues). The segment at 1–65 (MTESDRHDTP…GRPAADNKEL (65 aa)) is disordered. A coiled-coil region spans residues 59–102 (AADNKELQERVDNLTARNAKLLDTLKDARQQLVALREEVDRLGQ). 294–299 (GCGKTL) serves as a coordination point for ATP. Positions 606–607 (YL) are docks into pockets in the proteasome alpha-ring.

The protein belongs to the AAA ATPase family. In terms of assembly, homohexamer. Assembles into a hexameric ring structure that caps the 20S proteasome core. Strongly interacts with the prokaryotic ubiquitin-like protein Pup through a hydrophobic interface; the interacting region of ARC lies in its N-terminal coiled-coil domain. There is one Pup binding site per ARC hexamer ring. Upon ATP-binding, the C-terminus of ARC interacts with the alpha-rings of the proteasome core, possibly by binding to the intersubunit pockets.

The protein operates within protein degradation; proteasomal Pup-dependent pathway. In terms of biological role, ATPase which is responsible for recognizing, binding, unfolding and translocation of pupylated proteins into the bacterial 20S proteasome core particle. May be essential for opening the gate of the 20S proteasome via an interaction with its C-terminus, thereby allowing substrate entry and access to the site of proteolysis. Thus, the C-termini of the proteasomal ATPase may function like a 'key in a lock' to induce gate opening and therefore regulate proteolysis. The polypeptide is Proteasome-associated ATPase (Gordonia bronchialis (strain ATCC 25592 / DSM 43247 / BCRC 13721 / JCM 3198 / KCTC 3076 / NBRC 16047 / NCTC 10667) (Rhodococcus bronchialis)).